We begin with the raw amino-acid sequence, 88 residues long: Small ribosomal subunit protein uS15 (88 aa).

Residues 1 to 12 (MLTNTDRQQVIA) are compositionally biased toward polar residues. The segment at 1 to 23 (MLTNTDRQQVIAQYQRAPGDTGS) is disordered.

This sequence belongs to the universal ribosomal protein uS15 family. As to quaternary structure, part of the 30S ribosomal subunit. Forms a bridge to the 50S subunit in the 70S ribosome, contacting the 23S rRNA.

One of the primary rRNA binding proteins, it binds directly to 16S rRNA where it helps nucleate assembly of the platform of the 30S subunit by binding and bridging several RNA helices of the 16S rRNA. Functionally, forms an intersubunit bridge (bridge B4) with the 23S rRNA of the 50S subunit in the ribosome. The sequence is that of Small ribosomal subunit protein uS15 from Psychrobacter sp. (strain PRwf-1).